The sequence spans 393 residues: S-adenosylmethionine synthase (393 aa).

His-16 is a binding site for ATP. Asp-18 provides a ligand contact to Mg(2+). A K(+)-binding site is contributed by Glu-44. L-methionine contacts are provided by Glu-57 and Gln-100. The interval 100–110 is flexible loop; sequence QSPDIVMGVDG. Residues 165 to 167, 231 to 232, Asp-240, 246 to 247, and Lys-267 contribute to the ATP site; these read DAK, RF, and RK. Asp-240 contributes to the L-methionine binding site. Lys-271 contacts L-methionine.

It belongs to the AdoMet synthase family. In terms of assembly, homotetramer; dimer of dimers. It depends on Mg(2+) as a cofactor. K(+) serves as cofactor.

The protein resides in the cytoplasm. The catalysed reaction is L-methionine + ATP + H2O = S-adenosyl-L-methionine + phosphate + diphosphate. Its pathway is amino-acid biosynthesis; S-adenosyl-L-methionine biosynthesis; S-adenosyl-L-methionine from L-methionine: step 1/1. Catalyzes the formation of S-adenosylmethionine (AdoMet) from methionine and ATP. The overall synthetic reaction is composed of two sequential steps, AdoMet formation and the subsequent tripolyphosphate hydrolysis which occurs prior to release of AdoMet from the enzyme. The polypeptide is S-adenosylmethionine synthase (Coxiella burnetii (strain Dugway 5J108-111)).